Consider the following 113-residue polypeptide: LSM complex subunit lsm7 (113 aa).

The span at 1-17 shows a compositional bias: polar residues; it reads MSSLQKRPGPGNSSQPT. A disordered region spans residues 1–23; sequence MSSLQKRPGPGNSSQPTERPRKE. The Sm domain occupies 23 to 102; the sequence is ESILDLSRYQ…LVLIAPMDGS (80 aa).

The protein belongs to the snRNP Sm proteins family. As to quaternary structure, component of the heptameric LSM1-LSM7 complex that forms a seven-membered ring structure with a donut shape. The LSm subunits are arranged in the order lsm1, lsm2, lsm3, lsm6, lsm5, lsm7 and lsm4. Component of the heptameric LSM2-LSM8 complex that forms a seven-membered ring structure with a donut shape. The LSm subunits are arranged in the order lsm8, lsm2, lsm3, lsm6, lsm5, lsm7 and lsm4.

The protein resides in the cytoplasm. Its subcellular location is the nucleus. In terms of biological role, component of LSm protein complexes, which are involved in RNA processing and may function in a chaperone-like manner. Component of the cytoplasmic LSM1-LSM7 complex which is involved in mRNA degradation by activating the decapping step. The LSM1-LSM7 complex loads onto the 3'-end of single stranded RNA. Component of the nuclear LSM2-LSM8 complex, which is involved in spliceosome assembly. The LSM2-LSM8 complex plays a role in the biogenesis of the spliceosomal U4/U6-U5 tri-snRNP complex by accelerating prp24-mediated annealing of U4/U6 di-snRNA. The LSM2-LSM8 complex binds U6 snRNA terminating with a cyclic 2',3' phosphate group; RNA with an unmodified 3' hydroxyl or non-cyclic 3' phosphate is bound less tightly. The sequence is that of LSM complex subunit lsm7 (lsm7) from Schizosaccharomyces pombe (strain 972 / ATCC 24843) (Fission yeast).